The sequence spans 274 residues: Basic leucine zipper transcriptional factor ATF-like 2 (274 aa).

Disordered stretches follow at residues 1 to 47 (MHLC…ALHQ), 128 to 151 (GSCY…LLQC), and 187 to 229 (GSSS…PSSA). A bZIP domain is found at 17 to 80 (EQQRQLKKQK…AWWSRTLHVH (64 aa)). The interval 20 to 41 (RQLKKQKNRAAAQRSRQKHTDK) is basic motif. The span at 37-47 (KHTDKADALHQ) shows a compositional bias: basic and acidic residues. A leucine-zipper region spans residues 45 to 66 (LHQQHESLEKDNLALRKEIQSL). The span at 187–196 (GSSSKLSALQ) shows a compositional bias: low complexity.

This sequence belongs to the bZIP family. Heterodimer; heterodimerizes with JUN family proteins.

Its subcellular location is the nucleus. Its function is as follows. AP-1 family transcription factor that controls the differentiation of lineage-specific cells in the immune system. Following infection, participates in the differentiation of CD8(+) thymic conventional dendritic cells in the immune system. Acts via the formation of a heterodimer with JUN family proteins that recognizes and binds DNA sequence 5'-TGA[CG]TCA-3' and regulates expression of target genes. Selectively suppresses CCN1 transcription and hence blocks the downstream cell proliferation signals produced by CCN1 and inhibits CCN1-induced anchorage-independent growth and invasion in several cancer types, such as breast cancer, malignant glioma and metastatic melanoma. Possibly acts by interfering with AP-1 binding to CCN1 promoter. This is Basic leucine zipper transcriptional factor ATF-like 2 (BATF2) from Homo sapiens (Human).